A 789-amino-acid polypeptide reads, in one-letter code: GDH/6PGL endoplasmic bifunctional protein (789 aa).

Positions 1–16 (MLLAAMCLALLGCLQA) are cleaved as a signal peptide. Pyrrolidone carboxylic acid is present on glutamine 17. The interval 17-524 (QELKGHVSII…GGQLTFSQQQ (508 aa)) is hexose-6-phosphate dehydrogenase. NADP(+) is bound by residues 29 to 36 (GATGDLAK) and tyrosine 146. N-linked (GlcNAc...) asparagine glycosylation occurs at asparagine 154. Lysine 171 contributes to the NADP(+) binding site. Residues lysine 171, 201 to 205 (HYLGK), glutamate 240, and aspartate 259 each bind D-glucose 6-phosphate. Lysine 205 is subject to N6-succinyllysine. The active-site Proton acceptor is histidine 264. Asparagine 279 carries N-linked (GlcNAc...) asparagine glycosylation. Residues lysine 357 and arginine 362 each contribute to the D-glucose 6-phosphate site. Arginine 367 is a binding site for NADP(+). Lysine 424 is modified (N6-succinyllysine). The segment at 525-538 (LEVLIPDLGSVPKP) is linker. A 6-phosphogluconolactonase region spans residues 539–789 (SDFQVLGARY…WYMDYEAFLG (251 aa)). An NADP(+)-binding site is contributed by tryptophan 615. The N-linked (GlcNAc...) asparagine glycan is linked to asparagine 681.

It in the N-terminal section; belongs to the glucose-6-phosphate dehydrogenase family. In the C-terminal section; belongs to the glucosamine/galactosamine-6-phosphate isomerase family. 6-phosphogluconolactonase subfamily. As to quaternary structure, homodimer. In terms of tissue distribution, expressed in liver (at protein level). Expressed in muscles. Expressed in adipose tissues.

Its subcellular location is the endoplasmic reticulum lumen. It catalyses the reaction D-glucose 6-phosphate + NAD(+) = 6-phospho-D-glucono-1,5-lactone + NADH + H(+). The enzyme catalyses D-glucose 6-phosphate + NADP(+) = 6-phospho-D-glucono-1,5-lactone + NADPH + H(+). It carries out the reaction 6-phospho-D-glucono-1,5-lactone + H2O = 6-phospho-D-gluconate + H(+). The catalysed reaction is 2-deoxy-D-glucose 6-phosphate + NAD(+) = 2-deoxy-6-phospho-D-glucono-1,5-lactone + NADH + H(+). It catalyses the reaction 2-deoxy-D-glucose 6-phosphate + NADP(+) = 2-deoxy-6-phospho-D-glucono-1,5-lactone + NADPH + H(+). The enzyme catalyses D-galactose 6-phosphate + NADP(+) = 6-phospho-D-galactono-1,5-lactone + NADPH + H(+). It carries out the reaction D-galactose 6-phosphate + NAD(+) = 6-phospho-D-galactono-1,5-lactone + NADH + H(+). The catalysed reaction is D-glucosamine 6-phosphate + NADP(+) = 2-amino-2-deoxy-6-phospho-D-glucono-1,5-lactone + NADPH + 2 H(+). It catalyses the reaction D-glucose + NAD(+) = D-glucono-1,5-lactone + NADH + H(+). The enzyme catalyses D-glucose + NADP(+) = D-glucono-1,5-lactone + NADPH + H(+). It carries out the reaction D-glucose 6-sulfate + NADP(+) = 6-sulfo-D-glucono-1,5-lactone + NADPH + H(+). Its pathway is carbohydrate degradation; pentose phosphate pathway; D-ribulose 5-phosphate from D-glucose 6-phosphate (oxidative stage). The protein operates within carbohydrate degradation; pentose phosphate pathway; D-ribulose 5-phosphate from D-glucose 6-phosphate (oxidative stage): step 2/3. Functionally, bifunctional enzyme localized in the lumen of the endoplasmic reticulum that catalyzes the first two steps of the oxidative branch of the pentose phosphate pathway/shunt, an alternative to glycolysis and a major source of reducing power and metabolic intermediates for biosynthetic processes. Has a hexose-6-phosphate dehydrogenase activity, with broad substrate specificity compared to glucose-6-phosphate 1-dehydrogenase/G6PD, and catalyzes the first step of the pentose phosphate pathway. In addition, acts as a 6-phosphogluconolactonase and catalyzes the second step of the pentose phosphate pathway. May have a dehydrogenase activity for alternative substrates including glucosamine 6-phosphate and glucose 6-sulfate. The main function of this enzyme is to provide reducing equivalents such as NADPH to maintain the adequate levels of reductive cofactors in the oxidizing environment of the endoplasmic reticulum. By producing NADPH that is needed by reductases of the lumen of the endoplasmic reticulum like corticosteroid 11-beta-dehydrogenase isozyme 1/HSD11B1, indirectly regulates their activity. The polypeptide is GDH/6PGL endoplasmic bifunctional protein (Mus musculus (Mouse)).